The following is a 230-amino-acid chain: Orotidine 5'-phosphate decarboxylase (230 aa).

Substrate-binding positions include D11, K34, 61 to 70 (DLKLHDIPNT), T117, R179, Q188, G208, and R209. The active-site Proton donor is the K63.

The protein belongs to the OMP decarboxylase family. Type 1 subfamily. In terms of assembly, homodimer.

It carries out the reaction orotidine 5'-phosphate + H(+) = UMP + CO2. It functions in the pathway pyrimidine metabolism; UMP biosynthesis via de novo pathway; UMP from orotate: step 2/2. Catalyzes the decarboxylation of orotidine 5'-monophosphate (OMP) to uridine 5'-monophosphate (UMP). In Streptococcus equi subsp. zooepidemicus (strain H70), this protein is Orotidine 5'-phosphate decarboxylase.